A 334-amino-acid polypeptide reads, in one-letter code: N-acetyl-gamma-glutamyl-phosphate reductase (334 aa).

The active site involves cysteine 154.

It belongs to the NAGSA dehydrogenase family. Type 1 subfamily.

It localises to the cytoplasm. The enzyme catalyses N-acetyl-L-glutamate 5-semialdehyde + phosphate + NADP(+) = N-acetyl-L-glutamyl 5-phosphate + NADPH + H(+). It participates in amino-acid biosynthesis; L-arginine biosynthesis; N(2)-acetyl-L-ornithine from L-glutamate: step 3/4. Catalyzes the NADPH-dependent reduction of N-acetyl-5-glutamyl phosphate to yield N-acetyl-L-glutamate 5-semialdehyde. This is N-acetyl-gamma-glutamyl-phosphate reductase from Escherichia coli (strain K12).